Consider the following 194-residue polypeptide: Imidazoleglycerol-phosphate dehydratase (194 aa).

It belongs to the imidazoleglycerol-phosphate dehydratase family.

It localises to the cytoplasm. The enzyme catalyses D-erythro-1-(imidazol-4-yl)glycerol 3-phosphate = 3-(imidazol-4-yl)-2-oxopropyl phosphate + H2O. Its pathway is amino-acid biosynthesis; L-histidine biosynthesis; L-histidine from 5-phospho-alpha-D-ribose 1-diphosphate: step 6/9. The chain is Imidazoleglycerol-phosphate dehydratase from Listeria monocytogenes serotype 4a (strain HCC23).